The chain runs to 117 residues: uncharacterized protein (117 aa).

Positions 1–20 (MAAVHLYIISFTALMISSTS) are cleaved as a signal peptide.

This is an uncharacterized protein from Saccharomyces cerevisiae (strain ATCC 204508 / S288c) (Baker's yeast).